Consider the following 334-residue polypeptide: N-acetyl-gamma-glutamyl-phosphate reductase (334 aa).

Residue Cys154 is part of the active site.

This sequence belongs to the NAGSA dehydrogenase family. Type 1 subfamily.

The protein localises to the cytoplasm. It carries out the reaction N-acetyl-L-glutamate 5-semialdehyde + phosphate + NADP(+) = N-acetyl-L-glutamyl 5-phosphate + NADPH + H(+). It functions in the pathway amino-acid biosynthesis; L-arginine biosynthesis; N(2)-acetyl-L-ornithine from L-glutamate: step 3/4. Functionally, catalyzes the NADPH-dependent reduction of N-acetyl-5-glutamyl phosphate to yield N-acetyl-L-glutamate 5-semialdehyde. The sequence is that of N-acetyl-gamma-glutamyl-phosphate reductase from Buchnera aphidicola subsp. Acyrthosiphon pisum (strain Tuc7).